A 674-amino-acid chain; its full sequence is PTS system glucose-specific EIIBCA component (674 aa).

The PTS EIIB type-1 domain maps to M1–A89. C28 (phosphocysteine intermediate; for EIIB activity) is an active-site residue. Residues E117–Q476 form the PTS EIIC type-1 domain. 10 consecutive transmembrane segments (helical) span residues I126–F146, Y162–A182, W193–A213, V225–W245, M260–G280, F303–W323, P344–L364, L376–L396, G409–F429, and L442–F462. Positions D542–N646 constitute a PTS EIIA type-1 domain. The active-site Tele-phosphohistidine intermediate; for EIIA activity is the H594.

It is found in the cell membrane. The catalysed reaction is N(pros)-phospho-L-histidyl-[protein] + D-glucose(out) = D-glucose 6-phosphate(in) + L-histidyl-[protein]. In terms of biological role, the phosphoenolpyruvate-dependent sugar phosphotransferase system (sugar PTS), a major carbohydrate active transport system, catalyzes the phosphorylation of incoming sugar substrates concomitantly with their translocation across the cell membrane. This system is involved in glucose transport. The chain is PTS system glucose-specific EIIBCA component (ptsG) from Corynebacterium glutamicum (Brevibacterium saccharolyticum).